A 298-amino-acid polypeptide reads, in one-letter code: Protoheme IX farnesyltransferase (298 aa).

9 helical membrane-spanning segments follow: residues 29-49 (LIVF…PPLL), 51-71 (FGVA…LNCL), 97-117 (ETVT…HGFI), 120-140 (LTMW…TLIL), 148-168 (IVIG…AMTG), 175-195 (LVLF…LACY), 221-241 (ILWY…LGMS), 243-263 (GFYL…AIAL), and 278-298 (YSIL…LIVL).

It belongs to the UbiA prenyltransferase family. Protoheme IX farnesyltransferase subfamily.

It localises to the cell inner membrane. It carries out the reaction heme b + (2E,6E)-farnesyl diphosphate + H2O = Fe(II)-heme o + diphosphate. The protein operates within porphyrin-containing compound metabolism; heme O biosynthesis; heme O from protoheme: step 1/1. Functionally, converts heme B (protoheme IX) to heme O by substitution of the vinyl group on carbon 2 of heme B porphyrin ring with a hydroxyethyl farnesyl side group. This is Protoheme IX farnesyltransferase from Dechloromonas aromatica (strain RCB).